A 200-amino-acid chain; its full sequence is TATA-box-binding protein 1 (200 aa).

Residue T2 is modified to N-acetylthreonine. A run of 2 repeats spans residues 25-101 (LQNI…ARIV) and 115-192 (IQNI…YPVL).

Belongs to the TBP family. In terms of assembly, belongs to the TFIID complex together with the TBP-associated factors (TAFs). Binds DNA as monomer. Interacts with TAF1 (via N-terminus). Interacts with MEE12/CCG1. Associates with PWP2 in the nucleus. Component of a nuclear protein complex containing at least TATA binding proteins (TBPs, e.g. TBP1 and TBP2) and ATX1.

It localises to the nucleus. In terms of biological role, general transcription factor that functions at the core of the DNA-binding multiprotein factor TFIID. Binding of TFIID to the TATA box is the initial transcriptional step of the pre-initiation complex (PIC), playing a role in the activation of eukaryotic genes transcribed by RNA polymerase II. This chain is TATA-box-binding protein 1, found in Arabidopsis thaliana (Mouse-ear cress).